Consider the following 337-residue polypeptide: RNA 3'-terminal phosphate cyclase (337 aa).

ATP is bound by residues Q101 and H282 to D285. H306 functions as the Tele-AMP-histidine intermediate in the catalytic mechanism.

Belongs to the RNA 3'-terminal cyclase family. Type 1 subfamily.

The protein localises to the cytoplasm. It carries out the reaction a 3'-end 3'-phospho-ribonucleotide-RNA + ATP = a 3'-end 2',3'-cyclophospho-ribonucleotide-RNA + AMP + diphosphate. Catalyzes the conversion of 3'-phosphate to a 2',3'-cyclic phosphodiester at the end of RNA. The mechanism of action of the enzyme occurs in 3 steps: (A) adenylation of the enzyme by ATP; (B) transfer of adenylate to an RNA-N3'P to produce RNA-N3'PP5'A; (C) and attack of the adjacent 2'-hydroxyl on the 3'-phosphorus in the diester linkage to produce the cyclic end product. The biological role of this enzyme is unknown but it is likely to function in some aspects of cellular RNA processing. The protein is RNA 3'-terminal phosphate cyclase of Saccharolobus islandicus (strain M.16.4 / Kamchatka #3) (Sulfolobus islandicus).